A 945-amino-acid polypeptide reads, in one-letter code: Isoleucine--tRNA ligase (945 aa).

A 'HIGH' region motif is present at residues 67-77 (PYANGQIHLGH). L-isoleucyl-5'-AMP is bound at residue Glu-573. Positions 614 to 618 (KMSKS) match the 'KMSKS' region motif. Lys-617 serves as a coordination point for ATP. Cys-908, Cys-911, Cys-928, and Cys-931 together coordinate Zn(2+).

This sequence belongs to the class-I aminoacyl-tRNA synthetase family. IleS type 1 subfamily. Monomer. The cofactor is Zn(2+).

It localises to the cytoplasm. The catalysed reaction is tRNA(Ile) + L-isoleucine + ATP = L-isoleucyl-tRNA(Ile) + AMP + diphosphate. Its function is as follows. Catalyzes the attachment of isoleucine to tRNA(Ile). As IleRS can inadvertently accommodate and process structurally similar amino acids such as valine, to avoid such errors it has two additional distinct tRNA(Ile)-dependent editing activities. One activity is designated as 'pretransfer' editing and involves the hydrolysis of activated Val-AMP. The other activity is designated 'posttransfer' editing and involves deacylation of mischarged Val-tRNA(Ile). The protein is Isoleucine--tRNA ligase of Acinetobacter baylyi (strain ATCC 33305 / BD413 / ADP1).